A 424-amino-acid chain; its full sequence is Serine--tRNA ligase (424 aa).

An L-serine-binding site is contributed by 230–232 (TAE). 261–263 (RSE) contacts ATP. E284 is an L-serine binding site. ATP is bound at residue 348-351 (EISS). S384 contacts L-serine.

The protein belongs to the class-II aminoacyl-tRNA synthetase family. Type-1 seryl-tRNA synthetase subfamily. In terms of assembly, homodimer. The tRNA molecule binds across the dimer.

The protein resides in the cytoplasm. The enzyme catalyses tRNA(Ser) + L-serine + ATP = L-seryl-tRNA(Ser) + AMP + diphosphate + H(+). The catalysed reaction is tRNA(Sec) + L-serine + ATP = L-seryl-tRNA(Sec) + AMP + diphosphate + H(+). The protein operates within aminoacyl-tRNA biosynthesis; selenocysteinyl-tRNA(Sec) biosynthesis; L-seryl-tRNA(Sec) from L-serine and tRNA(Sec): step 1/1. Its function is as follows. Catalyzes the attachment of serine to tRNA(Ser). Is also able to aminoacylate tRNA(Sec) with serine, to form the misacylated tRNA L-seryl-tRNA(Sec), which will be further converted into selenocysteinyl-tRNA(Sec). The polypeptide is Serine--tRNA ligase (Streptococcus pneumoniae (strain 70585)).